Reading from the N-terminus, the 1160-residue chain is GPI inositol-deacylase (1160 aa).

The tract at residues 1–92 (MHRRSSGSPV…DPRSSSAAMP (92 aa)) is disordered. The segment covering 57–92 (GASTPRSRNSSTWRMPSSATTTLLPPDPRSSSAAMP) has biased composition (polar residues). An N-linked (GlcNAc...) asparagine glycan is attached at Asn65. The chain crosses the membrane as a helical span at residues 120–140 (PCSILTALTSLLASLFLCAIL). Residue Ser307 is part of the active site. Transmembrane regions (helical) follow at residues 786–806 (LVMRYRTVFAAFPILVVALVL) and 832–852 (SSLPMLLLAMSLLASSLATSS). N-linked (GlcNAc...) asparagine glycosylation occurs at Asn866. Helical transmembrane passes span 886–906 (AFFWFLVPLFGLICVGVCVIL) and 973–993 (ILLLLVSTTIPYQFAYLVACI). The N-linked (GlcNAc...) asparagine glycan is linked to Asn1019. A run of 4 helical transmembrane segments spans residues 1023–1043 (SIFILMLWILPINILVLLVWA), 1060–1080 (VLSIMPFILLVEAMTTGTMIP), 1092–1112 (LILFSIAIYAAVYGVSYAYLL), and 1115–1135 (LANIFAAWLVGVYFFSSGFSV).

It belongs to the GPI inositol-deacylase family.

The protein localises to the endoplasmic reticulum membrane. In terms of biological role, involved in inositol deacylation of GPI-anchored proteins which plays important roles in the quality control and ER-associated degradation of GPI-anchored proteins. The protein is GPI inositol-deacylase (bst1) of Aspergillus terreus (strain NIH 2624 / FGSC A1156).